Reading from the N-terminus, the 538-residue chain is UPF0761 membrane protein PsycPRwf_0630 (538 aa).

The next 6 membrane-spanning stretches (helical) occupy residues 43–63 (LLSI…VPAL), 100–120 (LTAI…TTIE), 143–163 (WTII…SSAV), 183–203 (WVQV…YWFI), 215–235 (IAGV…GIIM), and 247–267 (AFAA…LILL). Residues 427–538 (SVFSAQDADA…IITEDDNPNK (112 aa)) form a disordered region. A compositionally biased stretch (low complexity) spans 482–493 (PPDADIKAAAAK). Residues 503 to 514 (KHTETAKQEHKK) are compositionally biased toward basic and acidic residues.

It belongs to the UPF0761 family.

It is found in the cell inner membrane. In Psychrobacter sp. (strain PRwf-1), this protein is UPF0761 membrane protein PsycPRwf_0630.